The following is a 382-amino-acid chain: Secreted RxLR effector protein 118 (382 aa).

A signal peptide spans 1-21 (MRGAYYVTIALLVVASSQISA). The RxLR-dEER motif lies at 48 to 65 (RSLRGSRDVSNDVAIEER). The tract at residues 308–382 (MNKASTSKGK…AVTSLSSISN (75 aa)) is disordered. The segment covering 310–323 (KASTSKGKSSVFTR) has biased composition (polar residues).

It belongs to the RxLR effector family.

The protein localises to the secreted. It localises to the host nucleus. Its function is as follows. Secreted effector that completely suppresses the host cell death induced by cell death-inducing proteins. This chain is Secreted RxLR effector protein 118, found in Plasmopara viticola (Downy mildew of grapevine).